Consider the following 509-residue polypeptide: Maturase K (509 aa).

The protein belongs to the intron maturase 2 family. MatK subfamily.

Its subcellular location is the plastid. The protein resides in the chloroplast. Its function is as follows. Usually encoded in the trnK tRNA gene intron. Probably assists in splicing its own and other chloroplast group II introns. This Hottonia palustris (Water-violet) protein is Maturase K.